The sequence spans 236 residues: NAD(P)H-hydrate epimerase (236 aa).

The YjeF N-terminal domain maps to 11–217 (AAALDRELMS…SIAKKYDFDV (207 aa)). 61 to 65 (NNGGD) provides a ligand contact to (6S)-NADPHX. Residues N62 and D123 each contribute to the K(+) site. (6S)-NADPHX is bound by residues 127–133 (GFSFSGE) and D156. Position 159 (S159) interacts with K(+).

The protein belongs to the NnrE/AIBP family. Requires K(+) as cofactor.

It localises to the cytoplasm. The protein localises to the mitochondrion. It catalyses the reaction (6R)-NADHX = (6S)-NADHX. The catalysed reaction is (6R)-NADPHX = (6S)-NADPHX. Its function is as follows. Catalyzes the epimerization of the S- and R-forms of NAD(P)HX, a damaged form of NAD(P)H that is a result of enzymatic or heat-dependent hydration. This is a prerequisite for the S-specific NAD(P)H-hydrate dehydratase to allow the repair of both epimers of NAD(P)HX. The polypeptide is NAD(P)H-hydrate epimerase (Neurospora crassa (strain ATCC 24698 / 74-OR23-1A / CBS 708.71 / DSM 1257 / FGSC 987)).